The following is a 122-amino-acid chain: Large ribosomal subunit protein uL18 (122 aa).

Belongs to the universal ribosomal protein uL18 family. As to quaternary structure, part of the 50S ribosomal subunit; part of the 5S rRNA/L5/L18/L25 subcomplex. Contacts the 5S and 23S rRNAs.

This is one of the proteins that bind and probably mediate the attachment of the 5S RNA into the large ribosomal subunit, where it forms part of the central protuberance. The polypeptide is Large ribosomal subunit protein uL18 (Desulforamulus reducens (strain ATCC BAA-1160 / DSM 100696 / MI-1) (Desulfotomaculum reducens)).